Consider the following 340-residue polypeptide: Phosphoribosylformylglycinamidine cyclo-ligase (340 aa).

Belongs to the AIR synthase family.

It localises to the cytoplasm. The catalysed reaction is 2-formamido-N(1)-(5-O-phospho-beta-D-ribosyl)acetamidine + ATP = 5-amino-1-(5-phospho-beta-D-ribosyl)imidazole + ADP + phosphate + H(+). The protein operates within purine metabolism; IMP biosynthesis via de novo pathway; 5-amino-1-(5-phospho-D-ribosyl)imidazole from N(2)-formyl-N(1)-(5-phospho-D-ribosyl)glycinamide: step 2/2. This is Phosphoribosylformylglycinamidine cyclo-ligase from Lactococcus lactis subsp. cremoris (strain MG1363).